The following is a 305-amino-acid chain: Oxygen-dependent coproporphyrinogen-III oxidase (305 aa).

Residue Ser-98 coordinates substrate. A divalent metal cation contacts are provided by His-102 and His-112. His-112 serves as the catalytic Proton donor. 114-116 is a substrate binding site; that stretch reads NVR. Residues His-151 and His-181 each coordinate a divalent metal cation. The interval 246–281 is important for dimerization; sequence YVEFNLVYDRGTLFGLQSGGRTESILMSMPPLARWE. 264–266 lines the substrate pocket; sequence GGR.

The protein belongs to the aerobic coproporphyrinogen-III oxidase family. As to quaternary structure, homodimer. A divalent metal cation serves as cofactor.

The protein localises to the cytoplasm. It catalyses the reaction coproporphyrinogen III + O2 + 2 H(+) = protoporphyrinogen IX + 2 CO2 + 2 H2O. The protein operates within porphyrin-containing compound metabolism; protoporphyrin-IX biosynthesis; protoporphyrinogen-IX from coproporphyrinogen-III (O2 route): step 1/1. In terms of biological role, involved in the heme biosynthesis. Catalyzes the aerobic oxidative decarboxylation of propionate groups of rings A and B of coproporphyrinogen-III to yield the vinyl groups in protoporphyrinogen-IX. The protein is Oxygen-dependent coproporphyrinogen-III oxidase of Vibrio campbellii (strain ATCC BAA-1116).